Reading from the N-terminus, the 452-residue chain is Probable phosphoglucosamine mutase (452 aa).

S101 functions as the Phosphoserine intermediate in the catalytic mechanism. Mg(2+) is bound by residues S101, D242, D244, and D246. A Phosphoserine modification is found at S101.

Belongs to the phosphohexose mutase family. Mg(2+) serves as cofactor. In terms of processing, activated by phosphorylation.

It catalyses the reaction alpha-D-glucosamine 1-phosphate = D-glucosamine 6-phosphate. Functionally, catalyzes the conversion of glucosamine-6-phosphate to glucosamine-1-phosphate. The chain is Probable phosphoglucosamine mutase from Methanosphaera stadtmanae (strain ATCC 43021 / DSM 3091 / JCM 11832 / MCB-3).